Here is a 255-residue protein sequence, read N- to C-terminus: Cell division protein ZapD (255 aa).

The protein belongs to the ZapD family. As to quaternary structure, interacts with FtsZ.

It localises to the cytoplasm. In terms of biological role, cell division factor that enhances FtsZ-ring assembly. Directly interacts with FtsZ and promotes bundling of FtsZ protofilaments, with a reduction in FtsZ GTPase activity. The chain is Cell division protein ZapD from Methylococcus capsulatus (strain ATCC 33009 / NCIMB 11132 / Bath).